A 235-amino-acid chain; its full sequence is Phosphatidylserine decarboxylase proenzyme (235 aa).

The active-site Schiff-base intermediate with substrate; via pyruvic acid is Ser204. Ser204 is subject to Pyruvic acid (Ser); by autocatalysis.

It belongs to the phosphatidylserine decarboxylase family. PSD-A subfamily. As to quaternary structure, heterodimer of a large membrane-associated beta subunit and a small pyruvoyl-containing alpha subunit. Requires pyruvate as cofactor. In terms of processing, is synthesized initially as an inactive proenzyme. Formation of the active enzyme involves a self-maturation process in which the active site pyruvoyl group is generated from an internal serine residue via an autocatalytic post-translational modification. Two non-identical subunits are generated from the proenzyme in this reaction, and the pyruvate is formed at the N-terminus of the alpha chain, which is derived from the carboxyl end of the proenzyme. The post-translation cleavage follows an unusual pathway, termed non-hydrolytic serinolysis, in which the side chain hydroxyl group of the serine supplies its oxygen atom to form the C-terminus of the beta chain, while the remainder of the serine residue undergoes an oxidative deamination to produce ammonia and the pyruvoyl prosthetic group on the alpha chain.

The protein resides in the cell membrane. The enzyme catalyses a 1,2-diacyl-sn-glycero-3-phospho-L-serine + H(+) = a 1,2-diacyl-sn-glycero-3-phosphoethanolamine + CO2. It participates in phospholipid metabolism; phosphatidylethanolamine biosynthesis; phosphatidylethanolamine from CDP-diacylglycerol: step 2/2. In terms of biological role, catalyzes the formation of phosphatidylethanolamine (PtdEtn) from phosphatidylserine (PtdSer). The chain is Phosphatidylserine decarboxylase proenzyme from Mycobacterium sp. (strain KMS).